Reading from the N-terminus, the 238-residue chain is 3-dehydroquinate dehydratase (238 aa).

Residues 35–37 (ELR) and Arg70 contribute to the 3-dehydroquinate site. His133 acts as the Proton donor/acceptor in catalysis. The active-site Schiff-base intermediate with substrate is Lys160. 2 residues coordinate 3-dehydroquinate: Arg202 and Gln225.

It belongs to the type-I 3-dehydroquinase family. In terms of assembly, homodimer.

The catalysed reaction is 3-dehydroquinate = 3-dehydroshikimate + H2O. It participates in metabolic intermediate biosynthesis; chorismate biosynthesis; chorismate from D-erythrose 4-phosphate and phosphoenolpyruvate: step 3/7. In terms of biological role, involved in the third step of the chorismate pathway, which leads to the biosynthesis of aromatic amino acids. Catalyzes the cis-dehydration of 3-dehydroquinate (DHQ) and introduces the first double bond of the aromatic ring to yield 3-dehydroshikimate. The sequence is that of 3-dehydroquinate dehydratase from Staphylococcus aureus (strain Mu3 / ATCC 700698).